Consider the following 438-residue polypeptide: Acyl-CoA dehydrogenase apdG (438 aa).

Belongs to the acyl-CoA dehydrogenase family. The cofactor is FAD.

The protein operates within secondary metabolite biosynthesis. Acyl-CoA dehydrogenase; part of the gene cluster that mediates the biosynthesis of aspyridones. The polyketide-amino acid backbone preaspyridone A is first assembled by the PKS-NRPS hybrid apdA. The assembly of preaspyridone A is initiated by loading of malonyl-CoA onto apdA, followed by decarboxylation to yield the acetyl starter unit. The growing polyketide chain then elongates into a tetraketide. The adpA PKS module catalyzes three Claisen condensations, as well as beta-keto processing and methylation. Alpha-methylation step during polyketide synthesis is a prerequisite and a key checkpoint for chain transfer between PKS and NRPS modules. The downstream NRPS module contains the condensation (C), adenylation (A), and thiolation (T) domains and catalyzes the incorporation of tyrosine via the formation of the L-tyrosinyl-thioester and the amide linkage between L-tyrosinyl-thioester and the tetraketide. The bimodular assembly line is terminated with a reductase (R) domain that facilitates formation and release of the tetramic acid product. Because apdA lacks a designated enoylreductase (ER) domain, the required activity is provided the enoyl reductase apdC. ApdC appears to operate with different stereoselectivity in different PKS cycle. Combined with apdC, apdA is proposed to synthesize preaspyridone A via about 20 enzymatic steps. A number of oxidative steps performed successively by the cytochrome P450 monooxygenases apdE and apdB are required for the conversion of preaspyridone A to aspyridone A. The cytochrome P450 monooxygenase apdE is responsible for the oxidative dephenylation of preaspyridone A. Finally, the predicted FAD-dependent monooxygenase apdD and the acyl-CoA dehydrogenase apdG may be involved in the transformation of aspyridone A into aspyridone B. This chain is Acyl-CoA dehydrogenase apdG, found in Emericella nidulans (strain FGSC A4 / ATCC 38163 / CBS 112.46 / NRRL 194 / M139) (Aspergillus nidulans).